The primary structure comprises 321 residues: Phosphopantothenate--cysteine ligase 1 (321 aa).

The protein belongs to the PPC synthetase family. As to quaternary structure, homodimer.

It carries out the reaction (R)-4'-phosphopantothenate + L-cysteine + CTP = N-[(R)-4-phosphopantothenoyl]-L-cysteine + CMP + diphosphate + H(+). It participates in cofactor biosynthesis; coenzyme A biosynthesis; CoA from (R)-pantothenate: step 2/5. Its function is as follows. Catalyzes the first step in the biosynthesis of coenzyme A from vitamin B5, where cysteine is conjugated to 4'-phosphopantothenate to form 4-phosphopantothenoylcysteine. This chain is Phosphopantothenate--cysteine ligase 1, found in Oryza sativa subsp. japonica (Rice).